The primary structure comprises 55 residues: Eclosion hormone (55 aa).

Belongs to the insect eclosion hormone family.

It is found in the secreted. In terms of biological role, neuropeptide that triggers the performance of ecdysis behaviors at the end of a molt. It triggers adult behavior patterns: larval, pupal and adult ecdysis, and plasticization during the molt. The sequence is that of Eclosion hormone from Romalea microptera (Eastern lubber grasshopper).